The primary structure comprises 259 residues: DNA terminal protein (259 aa).

Tyr-190 bears the O-(5'-phospho-DNA)-tyrosine mark. The Nuclear localization signal motif lies at 243-259; the sequence is KKKYKRRQKRGYGSKGV.

This sequence belongs to the tectivirus DNA terminal protein family. In terms of assembly, heterodimer with viral polymerase. Binds to ssDNA.

The protein localises to the virion. It localises to the host nucleus. In terms of biological role, acts as a primer for viral genomic replication. DNA terminal protein is covalently linked to the 5'-ends of both strands of the genome through a phosphodiester bond between the beta-hydroxyl group of a tyrosine residue and the 5'-phosphate of the terminal deoxyadenylate. This protein is essential for DNA replication and is involved in the priming of DNA elongation. The protein is DNA terminal protein (VIII) of Enterobacteria phage PRD1 (Bacteriophage PRD1).